A 425-amino-acid chain; its full sequence is Tumor necrosis factor receptor superfamily member 16 (425 aa).

An N-terminal signal peptide occupies residues 1-29 (MRRAGAACSAMDRLRLLLLLILGVSSGGA). At 30 to 253 (KETCSTGLYT…VTRGTTDNLI (224 aa)) the chain is on the extracellular side. TNFR-Cys repeat units follow at residues 32 to 65 (TCST…QTVC), 67 to 108 (PCLD…DAVC), 109 to 147 (RCAY…NTVC), and 149 to 189 (ECPE…DAEC). Disulfide bonds link Cys-33–Cys-44, Cys-45–Cys-58, Cys-48–Cys-65, Cys-68–Cys-84, Cys-87–Cys-100, Cys-90–Cys-108, Cys-110–Cys-123, Cys-126–Cys-139, Cys-129–Cys-147, Cys-150–Cys-165, Cys-168–Cys-181, and Cys-171–Cys-189. Residues Asn-61 and Asn-71 are each glycosylated (N-linked (GlcNAc...) asparagine). The disordered stretch occupies residues 193–225 (PGRWIPRSTPPEGSDSTAPSTQEPEVPPEQDLV). The span at 206 to 215 (SDSTAPSTQE) shows a compositional bias: polar residues. Residues 254 to 274 (PVYCSILAAVVVGLVAYIAFK) form a helical membrane-spanning segment. Residues 275-425 (RWNSCKQNKQ…CSESTATSPV (151 aa)) lie on the Cytoplasmic side of the membrane. 2 stretches are compositionally biased toward polar residues: residues 282 to 292 (NKQGANSRPVN) and 306 to 327 (SGIS…TASG). The segment at 282–332 (NKQGANSRPVNQTPPPEGEKLHSDSGISVDSQSLHDQQTHTQTASGQALKG) is disordered. Ser-312 carries the phosphoserine modification. The segment at 327–342 (GQALKGDGNLYSSLPL) is mediates interaction with KIDINS220. A Death domain is found at 354–419 (GDTWRHLAGE…DIVESLCSES (66 aa)).

As to quaternary structure, homodimer; disulfide-linked. Heterodimer with SORCS2. The extracellular domains of the heterodimer bind NGF. The cytoplasmic region of the heterodimer binds TRIO. NGF binding mediates dissociation of TRIO from the receptor complex. Interacts with RTN4R. Interacts with TRAF2, TRAF4 and TRAF6. Interacts with PTPN13 and RANBP9. Interacts through TRAF6 with SQSTM1 which bridges NGFR to NTRK1. Interacts with BEX1. Interacts with BEX3. Interacts with KIDINS220 and NTRK1. Can form a ternary complex with NTRK1 and KIDINS220 and this complex is affected by the expression levels of KIDINS220. An increase in KIDINS220 expression leads to a decreased association of NGFR and NTRK1. Interacts (via death domain) with RAB31. Interacts with NTRK2; may regulate the ligand specificity of the NTRK2 receptor. Interacts with LINGO1. Interacts with NRADD. Interacts with MAGED1; the interaction antagonizes the association NGFR:NTRK1. Interacts (via death domain) with ARHGDIA and RIPK2. Interacts with BFAR. In terms of processing, subject to intramembrane proteolytic cleavage by the gamma-secretase complex, giving rise to an intracellular fragment that is rapidly degraded via the proteasome. N- and O-glycosylated. Post-translationally, phosphorylated on serine residues.

The protein localises to the cell membrane. It is found in the cytoplasm. Its subcellular location is the perikaryon. The protein resides in the cell projection. It localises to the growth cone. The protein localises to the dendritic spine. In terms of biological role, low affinity receptor which can bind to NGF, BDNF, NTF3, and NTF4. Forms a heterodimeric receptor with SORCS2 that binds the precursor forms of NGF, BDNF and NTF3 with high affinity, and has much lower affinity for mature NGF and BDNF. In response to proNGF binding, the heterodimeric receptor with SORCS2 activates a signaling cascade that leads to decreased Rac activity, reorganization of the actin cytoskeleton and neuronal growth cone collapse. Plays an important role in differentiation and survival of specific neuronal populations during development. Can mediate cell survival as well as cell death of neural cells. Plays a role in the inactivation of RHOA. Plays a role in the regulation of the translocation of GLUT4 to the cell surface in adipocytes and skeletal muscle cells in response to insulin, probably by regulating RAB31 activity, and thereby contributes to the regulation of insulin-dependent glucose uptake. Necessary for the circadian oscillation of the clock genes BMAL1, PER1, PER2 and NR1D1 in the suprachiasmatic nucleus (SCN) of the brain and in liver and of the genes involved in glucose and lipid metabolism in the liver. The sequence is that of Tumor necrosis factor receptor superfamily member 16 (Ngfr) from Rattus norvegicus (Rat).